The chain runs to 695 residues: Protein MALE DISCOVERER 1 (695 aa).

Residues 1 to 29 (MGCRWNPIGFQFSCFMFLIITLQSRSSLS) form the signal peptide. Topologically, residues 30–340 (LESEGFVLLK…SKGFKDVWLY (311 aa)) are extracellular. N-linked (GlcNAc...) asparagine glycans are attached at residues Asn56 and Asn80. 4 LRR repeats span residues 75–98 (KVQM…SQLS), 99–121 (ELRS…FASF), 123–144 (KLEF…ELNK), and 147–168 (TPEN…KFLR). Asn247 carries N-linked (GlcNAc...) asparagine glycosylation. Residues 302–325 (PPLIPPSSPPPLPTNNTIASDPPR) form a disordered region. Residues 303-314 (PLIPPSSPPPLP) are compositionally biased toward pro residues. Asn316 is a glycosylation site (N-linked (GlcNAc...) asparagine). A helical transmembrane segment spans residues 341–361 (VVIGVAAFVAMLIIVAVIFFF). Residues 362 to 695 (RKRAVKSIGP…ELEILSSEAT (334 aa)) are Cytoplasmic-facing. Residues 363–668 (KRAVKSIGPW…YVVQQLKEVI (306 aa)) enclose the Protein kinase domain. Ser652 bears the Phosphoserine mark.

Belongs to the protein kinase superfamily. Ser/Thr protein kinase family. As to quaternary structure, homodimer. Interacts with MIK1, MIK2 and LURE1.2. LURE1.2 enhances the heterodimerization of MDIS1 with MIK1 or MIK2. In terms of processing, phosphorylated by MIK1. As to expression, expressed in pollen tubes and seedlings.

The protein resides in the cell membrane. The protein localises to the endomembrane system. The enzyme catalyses L-seryl-[protein] + ATP = O-phospho-L-seryl-[protein] + ADP + H(+). The catalysed reaction is L-threonyl-[protein] + ATP = O-phospho-L-threonyl-[protein] + ADP + H(+). Functionally, involved in the pollen tube perception of the female signal. The protein is Protein MALE DISCOVERER 1 of Arabidopsis thaliana (Mouse-ear cress).